The sequence spans 291 residues: MFIIELIKGIILGVVEGLTEFAPVSSTGHMILVDDMWLKSSEFLGSQSAFTFKIVIQLGSVFAAAWVFRERFLEILHIGKHKHVEGDNDQQRRSKPRRLNLLHVLVGMVPAGILGLLFDDFIEEHLFSVPTVMIGLFVGAIYMIIADKYSAKVKNPQTVDQISYFQAFVIGISQAVAMWPGFSRSGSTISTGVLMKLNHKAASDFTFIMAVPIMLAASGLSLLKHYQDIQIADIPFYILGFLAAFTVGLIAIKTFLHQINKIKLIPFAIYRIVLVIFIAILYFGFGIGKGI.

8 helical membrane passes run 1-21 (MFII…LTEF), 48-68 (SAFT…AWVF), 102-122 (LHVL…DDFI), 126-146 (LFSV…MIIA), 162-182 (ISYF…WPGF), 203-223 (SDFT…LSLL), 231-251 (IADI…GLIA), and 267-287 (FAIY…GFGI).

This sequence belongs to the UppP family.

It is found in the cell membrane. It catalyses the reaction di-trans,octa-cis-undecaprenyl diphosphate + H2O = di-trans,octa-cis-undecaprenyl phosphate + phosphate + H(+). Functionally, catalyzes the dephosphorylation of undecaprenyl diphosphate (UPP). Confers resistance to bacitracin. The protein is Undecaprenyl-diphosphatase of Staphylococcus aureus (strain COL).